The primary structure comprises 325 residues: MRPILLQGHERSITQIKYNRDGDLLFTVAKDPVVNVWYSVNGERLGTYSGHTGAVWCVDVDWDTRHVLSGSADNSCRLWDCETGKQLALLETNSAVRTCGFDFGGNIIMFSTDKQMGYQCFVSFIDLRDPTQIEDNEPYMKIPCSESKITSAVWGPLGENIIAGHENGELNQYSAKSGEIVNSIKEHSKQINDIQTSRDMTMFVTASKDCTSKLFDSTSLEHQKTFRTERPVNSAAISPIYDHVVLGGGQEAMDVTTTSTRIGKFEARFFHVAFEEEFGRVKGHFGPINSLAFHPDGKSYSSGGEDGYVRIHYFDPQYFDFEFES.

WD repeat units follow at residues 8 to 47 (GHERSITQIKYNRDGDLLFTVAKDPVVNVWYSVNGERLGT), 50 to 89 (GHTGAVWCVDVDWDTRHVLSGSADNSCRLWDCETGKQLAL), 144 to 183 (CSESKITSAVWGPLGENIIAGHENGELNQYSAKSGEIVNS), 186 to 225 (EHSKQINDIQTSRDMTMFVTASKDCTSKLFDSTSLEHQKT), and 283 to 324 (GHFG…FEFE).

The protein belongs to the eIF-3 subunit I family. As to quaternary structure, component of the eukaryotic translation initiation factor 3 (eIF-3) complex, which is composed of 13 subunits: eif3a, eif3b, eif3c, eif3d, eif3e, eif3f, eif3g, eif3h, eif3i, eif3j, eif3k, eif3l and eif3m.

It is found in the cytoplasm. Its function is as follows. Component of the eukaryotic translation initiation factor 3 (eIF-3) complex, which is involved in protein synthesis of a specialized repertoire of mRNAs and, together with other initiation factors, stimulates binding of mRNA and methionyl-tRNAi to the 40S ribosome. The eIF-3 complex specifically targets and initiates translation of a subset of mRNAs involved in cell proliferation. The protein is Eukaryotic translation initiation factor 3 subunit I (eif3i) of Xenopus tropicalis (Western clawed frog).